Here is a 212-residue protein sequence, read N- to C-terminus: Negative modulator of initiation of replication (212 aa).

2 interaction with DNA regions span residues 113–114 (AV) and 144–148 (RTRVY).

Belongs to the SeqA family. Homodimer. Polymerizes to form helical filaments.

It localises to the cytoplasm. Functionally, negative regulator of replication initiation, which contributes to regulation of DNA replication and ensures that replication initiation occurs exactly once per chromosome per cell cycle. Binds to pairs of hemimethylated GATC sequences in the oriC region, thus preventing assembly of replication proteins and re-initiation at newly replicated origins. Repression is relieved when the region becomes fully methylated. This Actinobacillus succinogenes (strain ATCC 55618 / DSM 22257 / CCUG 43843 / 130Z) protein is Negative modulator of initiation of replication.